Consider the following 465-residue polypeptide: Sodium-dependent phosphate transport protein 1 (465 aa).

N-linked (GlcNAc...) asparagine glycosylation is found at Asn39, Asn47, and Asn56. 10 helical membrane passes run 79-99 (GLIL…VGYL), 117-137 (SLMS…VIVC), 176-196 (FVMG…LLGW), 199-219 (VFYI…FLFF), 260-280 (LPLW…SLLV), 304-324 (LPYL…DFFL), 337-356 (LFTT…LLYL), 363-383 (TVIF…GQLI), 399-419 (VTAL…GLIL), and 429-449 (KIFF…FLFA).

Belongs to the major facilitator superfamily. Sodium/anion cotransporter family. Interacts with PDZK1. As to expression, kidney.

The protein resides in the apical cell membrane. The catalysed reaction is 3 Na(+)(out) + phosphate(out) = 3 Na(+)(in) + phosphate(in). The enzyme catalyses urate(out) = urate(in). Functionally, important for the resorption of phosphate by the kidney. May be involved in actively transporting phosphate into cells via Na(+) cotransport in the renal brush border membrane. Plays a role in urate transport in the kidney. The polypeptide is Sodium-dependent phosphate transport protein 1 (Slc17a1) (Mus musculus (Mouse)).